Consider the following 227-residue polypeptide: Sensory transduction protein RegX3 (227 aa).

One can recognise a Response regulatory domain in the interval 3–116 (SVLIVEDEES…ELIARIRAVL (114 aa)). D52 is modified (4-aspartylphosphate). The ompR/PhoB-type DNA-binding region spans 128–227 (DGVLESGPVR…VRGLGYKLEG (100 aa)).

Post-translationally, phosphorylated by SenX3.

Its function is as follows. Member of the two-component regulatory system SenX3/RegX3. Specifically binds to the promoter region of the senX3-regX3 operon. The sequence is that of Sensory transduction protein RegX3 from Mycobacterium bovis (strain ATCC BAA-935 / AF2122/97).